A 253-amino-acid chain; its full sequence is Ribulose bisphosphate carboxylase large chain (253 aa).

2 residues coordinate substrate: Asn35 and Thr85. Lys87 acts as the Proton acceptor in catalysis. Substrate is bound at residue Lys89. 3 residues coordinate Mg(2+): Lys113, Asp115, and Glu116. An N6-carboxylysine modification is found at Lys113. His206 acts as the Proton acceptor in catalysis. 2 residues coordinate substrate: Arg207 and His239.

This sequence belongs to the RuBisCO large chain family. Type I subfamily. In terms of assembly, heterohexadecamer of 8 large chains and 8 small chains; disulfide-linked. The disulfide link is formed within the large subunit homodimers. Mg(2+) serves as cofactor. Post-translationally, the disulfide bond which can form in the large chain dimeric partners within the hexadecamer appears to be associated with oxidative stress and protein turnover.

Its subcellular location is the plastid. It is found in the chloroplast. It carries out the reaction 2 (2R)-3-phosphoglycerate + 2 H(+) = D-ribulose 1,5-bisphosphate + CO2 + H2O. The enzyme catalyses D-ribulose 1,5-bisphosphate + O2 = 2-phosphoglycolate + (2R)-3-phosphoglycerate + 2 H(+). RuBisCO catalyzes two reactions: the carboxylation of D-ribulose 1,5-bisphosphate, the primary event in carbon dioxide fixation, as well as the oxidative fragmentation of the pentose substrate in the photorespiration process. Both reactions occur simultaneously and in competition at the same active site. The sequence is that of Ribulose bisphosphate carboxylase large chain (rbcL) from Magnolia latahensis (Apocynophyllum latahense).